The sequence spans 194 residues: Ribonuclease HII (194 aa).

Positions 16 to 194 (CIVAGIDEAG…PYHRRSFRCC (179 aa)) constitute an RNase H type-2 domain. Aspartate 22, glutamate 23, and aspartate 113 together coordinate a divalent metal cation.

The protein belongs to the RNase HII family. Mn(2+) serves as cofactor. Requires Mg(2+) as cofactor.

It localises to the cytoplasm. The catalysed reaction is Endonucleolytic cleavage to 5'-phosphomonoester.. In terms of biological role, endonuclease that specifically degrades the RNA of RNA-DNA hybrids. The sequence is that of Ribonuclease HII from Rickettsia massiliae (strain Mtu5).